We begin with the raw amino-acid sequence, 1096 residues long: Serine-repeat antigen protein 3 (1096 aa).

Residues 1–21 (MARLSSIVFIICLLLCNNAIS) form the signal peptide. Residues 28–205 (PSSGGTLSGG…RSPPPQVNNI (178 aa)) form a disordered region. Positions 77-97 (NSDSTGDSSLGSTGSNGSQPA) are enriched in low complexity. N-linked (GlcNAc...) asparagine glycosylation occurs at asparagine 92. Over residues 102 to 113 (KEPEPTTPKEPE) the composition is skewed to basic and acidic residues. The segment covering 123–147 (VTPQKTAETASGKQVSPTPSENPPS) has biased composition (polar residues). The span at 149-161 (DTPKPESSSEKKV) shows a compositional bias: basic and acidic residues. N-linked (GlcNAc...) asparagine glycans are attached at residues asparagine 204, asparagine 607, asparagine 637, asparagine 662, asparagine 671, asparagine 712, asparagine 892, and asparagine 951. 2 disordered regions span residues 916 to 952 (EAKN…QANS) and 964 to 1006 (NQRT…ASAN). Polar residues-rich tracts occupy residues 925-952 (QNYG…QANS) and 964-975 (NQRTADSNPNAQ). Positions 976–1006 (STPSPNTTVTDTVNSNTANSNTANSNTASAN) are enriched in low complexity. 2 N-linked (GlcNAc...) asparagine glycosylation sites follow: asparagine 981 and asparagine 1039.

It belongs to the peptidase C1 family. In terms of processing, proteolytically cleaved in both blood and liver stage parasites. Precursor of 130 kDa is processed into 72 kDa and 55 kDa forms. Proteolytically cleaved by SUB1.

The protein localises to the cell membrane. It localises to the parasitophorous vacuole. Its subcellular location is the secreted. The protein resides in the host cytoplasm. Putative cysteine protease. Probably involved in merozoite release from the parasitophorous vacuole during liver stages. The polypeptide is Serine-repeat antigen protein 3 (Plasmodium berghei (strain Anka)).